The sequence spans 564 residues: Arginine--tRNA ligase (564 aa).

Positions 124–134 match the 'HIGH' region motif; the sequence is PNIAKDMHVGH.

It belongs to the class-I aminoacyl-tRNA synthetase family. As to quaternary structure, monomer.

The protein resides in the cytoplasm. The catalysed reaction is tRNA(Arg) + L-arginine + ATP = L-arginyl-tRNA(Arg) + AMP + diphosphate. This Chlamydia caviae (strain ATCC VR-813 / DSM 19441 / 03DC25 / GPIC) (Chlamydophila caviae) protein is Arginine--tRNA ligase.